The following is a 73-amino-acid chain: MKSFNLLSLSLLLAIASAAAVPDVEGTITNDAATPVNNLDDKRDHCGQVCLNKTGCGGKCPKCDMRSLTCKKA.

An N-terminal signal peptide occupies residues 1 to 20; that stretch reads MKSFNLLSLSLLLAIASAAA. Cystine bridges form between cysteine 46–cysteine 60, cysteine 50–cysteine 63, and cysteine 56–cysteine 70.

Belongs to the UPF0499 family.

The protein resides in the secreted. The sequence is that of UPF0499 protein NFIA_054990 from Neosartorya fischeri (strain ATCC 1020 / DSM 3700 / CBS 544.65 / FGSC A1164 / JCM 1740 / NRRL 181 / WB 181) (Aspergillus fischerianus).